Consider the following 554-residue polypeptide: (E)-nerolidol synthase TPS18VF (554 aa).

Positions 276, 313, 317, 455, and 458 each coordinate (2E,6E)-farnesyl diphosphate. Mg(2+) is bound by residues aspartate 313 and aspartate 317. Residues 313–317 (DDIFD) carry the DDXXD motif motif. The Mg(2+) site is built by aspartate 458, serine 462, and glutamate 466.

Belongs to the terpene synthase family. Tpsb subfamily. Mg(2+) is required as a cofactor. It depends on Mn(2+) as a cofactor. Highly expressed in glandular trichomes.

It catalyses the reaction (2E,6E)-farnesyl diphosphate + H2O = (6E)-nerolidol + diphosphate. The catalysed reaction is (2E)-geranyl diphosphate + H2O = (R)-linalool + diphosphate. The enzyme catalyses (2E)-geranyl diphosphate + H2O = (S)-linalool + diphosphate. The protein operates within secondary metabolite biosynthesis; terpenoid biosynthesis. In terms of biological role, involved in sesquiterpene olefins biosynthesis, constituants of cannabinoids and terpenoids-rich resins. Catalyzes primarily the conversion of (2E)-farnesyl diphosphate to (E)-nerolidol, and the conversion of (2E)-geranyl diphosphate to (+)linalool and (-)linalool. In Cannabis sativa (Hemp), this protein is (E)-nerolidol synthase TPS18VF.